The sequence spans 533 residues: RNA end formation protein 2 (533 aa).

Disordered regions lie at residues 187–254 (SNST…SSMK), 260–279 (LFNKNEAKSTESLPTSSKKK), and 321–344 (SSSTSGSSTTTVATPASSEEPLKK). Basic and acidic residues predominate over residues 206-222 (KIKDSEKEKEKEKDKSK). Positions 242–252 (SSPSPTASTSS) are enriched in low complexity. The segment covering 321–338 (SSSTSGSSTTTVATPASS) has biased composition (low complexity).

Interacts with FIR1. Component of the cleavage and polyadenylation factor (CPF) complex, which is composed of PTI1, SYC1, SSU72, GLC7, MPE1, REF2, PFS2, PTA1, YSH1/BRR5, SWD2, CFT2/YDH1, YTH1, CFT1/YHH1, FIP1 and PAP1. Component of the APT complex, which is a subcomplex of CPF, and is composed of PTI1, SYC1, SSU72, GLC7, REF2, PTA1 and SWD2.

It localises to the nucleus. In terms of biological role, RNA-binding component of the cleavage and polyadenylation factor (CPF) complex, which plays a key role in polyadenylation-dependent pre-mRNA 3'-end formation and cooperates with cleavage factors including the CFIA complex and NAB4/CFIB. Negative regulator of poly(A) synthesis. Component of the APT complex, which may be involved in polyadenylation-independent transcript 3'-end formation. REF2 is required for 3'-end formation of snoRNAs. The polypeptide is RNA end formation protein 2 (REF2) (Saccharomyces cerevisiae (strain ATCC 204508 / S288c) (Baker's yeast)).